The sequence spans 564 residues: Dicarboxylate transporter 2, chloroplastic (564 aa).

The N-terminal 22 residues, 1 to 22 (MESLALLPTLSLSTTTTTSKAT), are a transit peptide targeting the chloroplast. The disordered stretch occupies residues 35 to 58 (RRPHLSLSLSSTPKPTLTFSSHSH). Residues 39 to 58 (LSLSLSSTPKPTLTFSSHSH) show a composition bias toward low complexity. Helical transmembrane passes span 94 to 114 (GAKL…RFAV), 127 to 147 (LLAI…PVGA), 166 to 186 (TAFC…FFFA), 235 to 255 (AGGI…SLPG), 262 to 282 (LGTY…ALFL), 307 to 327 (VFWL…TPLI), 356 to 376 (VTKN…LWVF), 380 to 400 (IGVS…LLGV), 415 to 435 (TLAW…LGIV), 451 to 471 (LSWP…HYLF), 484 to 504 (AFLA…LALA), and 538 to 558 (MGFI…GVWW).

The protein belongs to the SLC13A/DASS transporter (TC 2.A.47) family. DIT1 subfamily. Expressed in leaves.

It is found in the plastid. The protein localises to the chloroplast inner membrane. Glutamate/malate translocator involved with DIT1 in primary ammonia assimilation and in the re-assimilation of ammonia generated by the photorespiratory pathway. Exports the end product of ammonia assimilation, glutamate, from plastids to the cytosol. The precursor for ammonia assimilation, 2-oxoglutarate, is imported from the cytosol by DIT1. The sequence is that of Dicarboxylate transporter 2, chloroplastic (DIT2) from Spinacia oleracea (Spinach).